The primary structure comprises 804 residues: MSFQHKEIEKKWQTYWLENKTFATLDNNEKQKFYALDMFPYPSGAGLHVGHPEGYTATDILSRMKRMQGYDVLHPMGWDAFGLPAEQYALDTGNDPAVFTKQNIDNFRRQIQALGFSYDWDREINTTDPEYYKWTQWIFLKLYEKGLAYVDEVPVNWCPALGTVLANEEVIDGKSERGGHPVERRPMKQWMLKITAYADRLLEDLEELDWPESIKDMQRNWIGRSEGAHVHFAIDGHDDSFTVFTTRPDTLFGATYTVLAPEHALVENITTAEQKEAVEAYIKEIQSKSDLERTDLAKTKTGVFTGAYAINPVNGEKLPIWIADYVLASYGTGAVMAVPGHDERDFEFAKTFGLPVKEVVKGGNVEEAAYTGDGEHVNSDFLNGLHKQEAIEKVIAWLEETKNGEKKVTYRLRDWLFSRQRYWGEPIPVIHWEDGTSTAVPEEELPLILPKTDEIKPSGTGESPLANIKEWVEVTDPETGKKGRRETNTMPQWAGSCWYFLRYIDPHNPDQLASPEKLEKWLPVDMYIGGAEHAVLHLLYARFWHKFLYDIGVVPTKEPFQKLYNQGMILGENNEKMSKSKGNVVNPDEIVASHGADTLRLYEMFMGPLDASIAWSESGLDGARRFLDRVWRLFIEDSGELNGKIVEGAGETLERVYHETVMKVTDHYEGLRFNTGISQLMVFINEAYKATELPKEYMEGFVKLLSPVAPHLAEELWEKLGHSGTIAYEAWPVYDETKLVDDEVEIVVQLNGKVKAKLQVPADATKEQLEQLAQADEKVKEQLEGKTIRKIIAVPGKLVNIVAN.

The short motif at 40 to 51 (PYPSGAGLHVGH) is the 'HIGH' region element. Residues 576–580 (KMSKS) carry the 'KMSKS' region motif. Lys579 contributes to the ATP binding site.

This sequence belongs to the class-I aminoacyl-tRNA synthetase family.

The protein localises to the cytoplasm. The enzyme catalyses tRNA(Leu) + L-leucine + ATP = L-leucyl-tRNA(Leu) + AMP + diphosphate. This is Leucine--tRNA ligase from Bacillus subtilis (strain 168).